A 236-amino-acid polypeptide reads, in one-letter code: Demethylmenaquinone methyltransferase (236 aa).

Residues Thr-62, Asp-80, 107 to 108 (DA), and Ser-124 contribute to the S-adenosyl-L-methionine site.

This sequence belongs to the class I-like SAM-binding methyltransferase superfamily. MenG/UbiE family.

The enzyme catalyses a 2-demethylmenaquinol + S-adenosyl-L-methionine = a menaquinol + S-adenosyl-L-homocysteine + H(+). It participates in quinol/quinone metabolism; menaquinone biosynthesis; menaquinol from 1,4-dihydroxy-2-naphthoate: step 2/2. Functionally, methyltransferase required for the conversion of demethylmenaquinol (DMKH2) to menaquinol (MKH2). The protein is Demethylmenaquinone methyltransferase of Thermobifida fusca (strain YX).